We begin with the raw amino-acid sequence, 319 residues long: uncharacterized protein (319 aa).

The N-terminal stretch at 1 to 27 (MYKKFVPFAVFLFLFFVSFEMMENPHA) is a signal peptide. The region spanning 130–306 (PMVAFLINVA…QIKDKGYALG (177 aa)) is the NodB homology domain.

Belongs to the polysaccharide deacetylase family.

This is an uncharacterized protein from Bacillus subtilis (strain 168).